A 461-amino-acid chain; its full sequence is Cysteine--tRNA ligase (461 aa).

Cysteine 28 provides a ligand contact to Zn(2+). Residues 30 to 40 (ITIYDLCHIGH) carry the 'HIGH' region motif. Residues cysteine 209, histidine 234, and glutamate 238 each contribute to the Zn(2+) site. A 'KMSKS' region motif is present at residues 266–270 (KMSKS). Lysine 269 is a binding site for ATP.

Belongs to the class-I aminoacyl-tRNA synthetase family. In terms of assembly, monomer. Requires Zn(2+) as cofactor.

The protein localises to the cytoplasm. The enzyme catalyses tRNA(Cys) + L-cysteine + ATP = L-cysteinyl-tRNA(Cys) + AMP + diphosphate. This chain is Cysteine--tRNA ligase, found in Photorhabdus laumondii subsp. laumondii (strain DSM 15139 / CIP 105565 / TT01) (Photorhabdus luminescens subsp. laumondii).